We begin with the raw amino-acid sequence, 417 residues long: MSLSNKLSVKDLNVTGKRVFIRVDFNVPLDGKTITNNQRIVAALPTIKYVEEQKPKCIILASHLGRPNGERNEKYSLAPVAAELEKLLGQKVTFLDDCVGPEVTKAVDSATEGQIFLLENLRFHIEEEGSAKDKDGKKTKADPEAVKKFREQLTSLADVYVNDAFGTAHRAHSSMVGLEVPERAAGFLMSKELEYFAKALENPQRPFLAILGGAKVSDKIQLIDNLLDKVDMLIVGGGMAFTFKKVLNNMPIGDSLFDEAGAKNVENLVAKAKKNNVELILPVDFVTADKFDKDAEVSTADDVTGIPDKWMGLDCGPKSRKLFADAVAKAKTIVWNGPPGVFEFDKFAEGTKSLLDDAVKSAEVGNIVIIGGGDTATVAKKYGVVDKLSHVSTGGGASLELLEGKELPGVTALSNKA.

The (2R)-3-phosphoglycerate site is built by V23, D24, F25, N26, Q38, R39, S62, H63, G65, R66, L121, R122, H169, and R170. Position 213 (G213) interacts with ADP. Residue G213 participates in CDP binding. Residues A214 and K215 each coordinate AMP. A214 is an ATP binding site. A214 contributes to the Mg(2+) binding site. D218 serves as a coordination point for CDP. D218 contributes to the Mg(2+) binding site. K219 contacts AMP. K219 serves as a coordination point for ATP. G237 lines the ADP pocket. G237 contacts CDP. AMP contacts are provided by G238 and G312. The ATP site is built by G238 and G312. 2 residues coordinate CDP: G337 and F342. F342 provides a ligand contact to ADP. Residue E343 participates in AMP binding. Positions 343, 374, and 375 each coordinate ATP. D374 contributes to the Mg(2+) binding site.

This sequence belongs to the phosphoglycerate kinase family. In terms of assembly, monomer. Mg(2+) serves as cofactor.

It is found in the cytoplasm. The protein localises to the mitochondrion. The catalysed reaction is (2R)-3-phosphoglycerate + ATP = (2R)-3-phospho-glyceroyl phosphate + ADP. The protein operates within carbohydrate degradation; glycolysis; pyruvate from D-glyceraldehyde 3-phosphate: step 2/5. Functionally, catalyzes one of the two ATP producing reactions in the glycolytic pathway via the reversible conversion of 1,3-diphosphoglycerate to 3-phosphoglycerate. Both L- and D- forms of purine and pyrimidine nucleotides can be used as substrates, but the activity is much lower on pyrimidines. Negatively regulates the biosynthesis of acetyl-CoA from pyruvate in the mitochondrion. The sequence is that of Phosphoglycerate kinase (PGK1) from Candida maltosa (Yeast).